We begin with the raw amino-acid sequence, 175 residues long: Rubredoxin-1 (175 aa).

2 consecutive Rubredoxin-like domains span residues 1–53 (MARY…FVLI) and 119–170 (FLKW…YVLY). Fe cation contacts are provided by C6, C9, C39, C42, C124, C127, C157, and C160.

The protein belongs to the rubredoxin family. Fe(3+) is required as a cofactor.

Its subcellular location is the cytoplasm. It functions in the pathway hydrocarbon metabolism; alkane degradation. In terms of biological role, involved in the hydrocarbon hydroxylating system, which transfers electrons from NADH to rubredoxin reductase and then through rubredoxin to alkane 1 monooxygenase. In Pseudomonas putida (Arthrobacter siderocapsulatus), this protein is Rubredoxin-1 (alkG).